Here is a 323-residue protein sequence, read N- to C-terminus: L-lactate dehydrogenase (323 aa).

Residues Val-18, Asp-39, Tyr-69, and 83–84 (GA) contribute to the NAD(+) site. Substrate-binding residues include Gln-86 and Arg-92. NAD(+) contacts are provided by residues Ser-105, 122–124 (VAN), and Ser-147. Residue 124–127 (NPVD) coordinates substrate. Residue 152–155 (DTGR) participates in substrate binding. The active-site Proton acceptor is His-179. A Phosphotyrosine modification is found at Tyr-223. Thr-232 contacts substrate.

It belongs to the LDH/MDH superfamily. LDH family. Homotetramer.

It is found in the cytoplasm. The catalysed reaction is (S)-lactate + NAD(+) = pyruvate + NADH + H(+). The protein operates within fermentation; pyruvate fermentation to lactate; (S)-lactate from pyruvate: step 1/1. With respect to regulation, under neutral conditions, the reaction is stimulated 4-fold by fructose 1,6-bisphosphate (FBP), however the L-lactate dehydrogenase is a nonallosteric enzyme. Calcium and zinc ions at 1 mM stimulate the activity almost 2-fold. Weakly inhibited by cadmium, cobalt and copper ions. Functionally, catalyzes the conversion of lactate to pyruvate. This is L-lactate dehydrogenase from Lactobacillus helveticus (Lactobacillus suntoryeus).